Reading from the N-terminus, the 623-residue chain is Xaa-Pro aminopeptidase 1 (623 aa).

Position 77 (R77) interacts with a peptide. An N6-acetyllysine modification is found at K304. H395 is an a peptide binding site. D415, D426, and H489 together coordinate Mn(2+). The a peptide site is built by H489, H498, and E523. Positions 523 and 537 each coordinate Mn(2+).

The protein belongs to the peptidase M24B family. As to quaternary structure, homodimer. It depends on Mn(2+) as a cofactor. As to expression, expressed in all tissues tested, including liver, adrenal decapsular tissue, adrenal capsular tissue, corpus luteum, testis, submandibular gland, thymus, brain, cerebellum and heart. Highest levels in testis.

Its subcellular location is the cytoplasm. It carries out the reaction Release of any N-terminal amino acid, including proline, that is linked to proline, even from a dipeptide or tripeptide.. Inhibited by inositol hexakisphosphate. Its function is as follows. Metalloaminopeptidase that catalyzes the removal of a penultimate prolyl residue from the N-termini of peptides, such as Arg-Pro-Pro. Contributes to the degradation of bradykinin. This chain is Xaa-Pro aminopeptidase 1, found in Rattus norvegicus (Rat).